We begin with the raw amino-acid sequence, 403 residues long: Betaine--homocysteine S-methyltransferase 1 (403 aa).

One can recognise a Hcy-binding domain in the interval 8–311 (KGLLERLDAG…YHTRAIAEEL (304 aa)). 3 residues coordinate Zn(2+): Cys-214, Cys-296, and Cys-297.

Homotetramer. Zn(2+) serves as cofactor.

The protein localises to the cytoplasm. The catalysed reaction is L-homocysteine + glycine betaine = N,N-dimethylglycine + L-methionine. It functions in the pathway amine and polyamine degradation; betaine degradation; sarcosine from betaine: step 1/2. It participates in amino-acid biosynthesis; L-methionine biosynthesis via de novo pathway; L-methionine from L-homocysteine (BhmT route): step 1/1. Functionally, involved in the regulation of homocysteine metabolism. Converts betaine and homocysteine to dimethylglycine and methionine, respectively. This reaction is also required for the irreversible oxidation of choline. The chain is Betaine--homocysteine S-methyltransferase 1 (bhmt) from Xenopus laevis (African clawed frog).